The sequence spans 166 residues: Phosphopantetheine adenylyltransferase (166 aa).

Residue T10 participates in substrate binding. ATP-binding positions include 10 to 11 (TF) and H18. Residues K42, L75, and R89 each coordinate substrate. ATP is bound by residues 90–92 (GVR), E100, and 125–131 (YTYVAST).

It belongs to the bacterial CoaD family. In terms of assembly, homohexamer. Requires Mg(2+) as cofactor.

The protein localises to the cytoplasm. The enzyme catalyses (R)-4'-phosphopantetheine + ATP + H(+) = 3'-dephospho-CoA + diphosphate. Its pathway is cofactor biosynthesis; coenzyme A biosynthesis; CoA from (R)-pantothenate: step 4/5. Its function is as follows. Reversibly transfers an adenylyl group from ATP to 4'-phosphopantetheine, yielding dephospho-CoA (dPCoA) and pyrophosphate. The polypeptide is Phosphopantetheine adenylyltransferase (Chlorobaculum parvum (strain DSM 263 / NCIMB 8327) (Chlorobium vibrioforme subsp. thiosulfatophilum)).